We begin with the raw amino-acid sequence, 758 residues long: Actin filament-associated protein 1-like 1 (758 aa).

The segment at 91–194 (YRDSSENLSC…YESYDEEDEE (104 aa)) is disordered. Residues 102–120 (LPPPPSAPPPPLPTTPPPE) show a composition bias toward pro residues. A compositionally biased stretch (polar residues) spans 137 to 148 (YITSRNSSSPPN). A compositionally biased stretch (low complexity) spans 177-186 (ESDGLSSSYE). Residues 216–312 (DSRICAFLLR…WLRVIKEVIS (97 aa)) enclose the PH 1 domain. The tract at residues 335–369 (SHDKTSDSDSAANGENSSLSSGKENRDTGKCRKGG) is disordered. Residues 342–356 (SDSAANGENSSLSSG) are compositionally biased toward polar residues. The PH 2 domain occupies 409–503 (EVPCCGYLSV…WLGLLLAQTG (95 aa)). Residues 602–690 (KTRAEEDARK…TEVKENLKKS (89 aa)) are a coiled coil. The interval 692-758 (AGGPTLGLAV…KAKEWEKKKP (67 aa)) is disordered. Basic and acidic residues predominate over residues 749–758 (KAKEWEKKKP).

It is found in the cytoplasm. It localises to the cell projection. Its subcellular location is the podosome. The protein localises to the invadopodium. The protein resides in the cytoskeleton. It is found in the stress fiber. In terms of biological role, may be involved in podosome and invadosome formation. In Xenopus tropicalis (Western clawed frog), this protein is Actin filament-associated protein 1-like 1 (afap1l1).